A 314-amino-acid chain; its full sequence is Ferredoxin:CoB-CoM heterodisulfide reductase subunit B (314 aa).

Belongs to the HdrB family. As to quaternary structure, the ferredoxin:CoB-CoM heterodisulfide reductase is composed of three subunits; HdrA1, HdrB1 and HdrC1. [4Fe-4S] cluster is required as a cofactor.

Its subcellular location is the cytoplasm. It catalyses the reaction coenzyme B + coenzyme M + 2 oxidized [2Fe-2S]-[ferredoxin] = coenzyme M-coenzyme B heterodisulfide + 2 reduced [2Fe-2S]-[ferredoxin] + 2 H(+). It functions in the pathway cofactor metabolism; coenzyme M-coenzyme B heterodisulfide reduction; coenzyme B and coenzyme M from coenzyme M-coenzyme B heterodisulfide: step 1/1. In terms of biological role, part of a complex that catalyzes the reversible reduction of CoM-S-S-CoB to the thiol-coenzymes H-S-CoM (coenzyme M) and H-S-CoB (coenzyme B). Probably involved in methylotrophic methanogenesis but not in aceticlastic methanogenesis. The sequence is that of Ferredoxin:CoB-CoM heterodisulfide reductase subunit B from Methanosarcina acetivorans (strain ATCC 35395 / DSM 2834 / JCM 12185 / C2A).